A 92-amino-acid chain; its full sequence is UPF0250 protein VV0902 (92 aa).

The protein belongs to the UPF0250 family.

The polypeptide is UPF0250 protein VV0902 (Vibrio vulnificus (strain YJ016)).